The primary structure comprises 505 residues: uncharacterized protein (505 aa).

Residues 11–27 (IGIIGGGIVGWLAAIAL) traverse the membrane as a helical segment.

The protein localises to the membrane. This is an uncharacterized protein from Sinorhizobium fredii (strain NBRC 101917 / NGR234).